A 347-amino-acid chain; its full sequence is MTTTTSGAPASLGRNELPPHLDENLLTPRFYTTEFEKAAKTDLEIARKDFEAMFKEMEADYNLKHFDRKASLERLDELSPEDKAVYESYLVRSVVSEFSGFLLFKEISNRFKKAGRQELGQFFTFLARDEARHAGFLGRALKTEGINVDLPNLPKKRAATFFPLSWVLYSLYLSEKIGYWRYILINRHLKANPDKVCAPLFDFFEPWCQDENRHGDCINLMMRCWPGMTKGFRGKLLSRFFLWTVFLTHTLTVCERGEFYELLGIDPVLFDEEVIIQTNNTSKNAFPWVYKFEDGKFLSMRIDILNAFKKWRNQNGIKKPLALGKFVLLILKQFTLPMEKTDAVRYG.

It belongs to the AcsF family. It depends on Fe cation as a cofactor.

The catalysed reaction is Mg-protoporphyrin IX 13-monomethyl ester + 3 NADPH + 3 O2 + 2 H(+) = 3,8-divinyl protochlorophyllide a + 3 NADP(+) + 5 H2O. Its pathway is porphyrin-containing compound metabolism; chlorophyll biosynthesis (light-independent). Catalyzes the formation of the isocyclic ring in chlorophyll biosynthesis. Mediates the cyclase reaction, which results in the formation of divinylprotochlorophyllide (Pchlide) characteristic of all chlorophylls from magnesium-protoporphyrin IX 13-monomethyl ester (MgPMME). This is Magnesium-protoporphyrin IX monomethyl ester [oxidative] cyclase from Prochlorococcus marinus (strain SARG / CCMP1375 / SS120).